The sequence spans 229 residues: Transmembrane emp24 domain-containing protein 5 (229 aa).

An N-terminal signal peptide occupies residues 1–27 (MGDKIWLPFPVLLLAALPPVLLPGAAG). Topologically, residues 28-196 (FTPSLDSDFT…IQESNFDRVN (169 aa)) are lumenal. A GOLD domain is found at 45 to 126 (KECFYQPMPL…EKVIFFELIL (82 aa)). Residues 197–217 (FWSMVNLVVMVVVSAIQVYML) form a helical membrane-spanning segment. The Cytoplasmic portion of the chain corresponds to 218–229 (KSLFEDKRKSRT).

The protein belongs to the EMP24/GP25L family. Interacts with TMED9 and TMED10.

It is found in the endoplasmic reticulum membrane. The protein resides in the golgi apparatus. Its subcellular location is the cis-Golgi network membrane. The protein localises to the endoplasmic reticulum-Golgi intermediate compartment membrane. Functionally, potential role in vesicular protein trafficking, mainly in the early secretory pathway. Required for the maintenance of the Golgi apparatus; involved in protein exchange between Golgi stacks during assembly. Probably not required for COPI-vesicle-mediated retrograde transport. The sequence is that of Transmembrane emp24 domain-containing protein 5 (TMED5) from Homo sapiens (Human).